A 388-amino-acid polypeptide reads, in one-letter code: NADH-quinone oxidoreductase subunit D 2 (388 aa).

The protein belongs to the complex I 49 kDa subunit family. As to quaternary structure, NDH-1 is composed of 14 different subunits. Subunits NuoB, C, D, E, F, and G constitute the peripheral sector of the complex.

It localises to the cell membrane. The catalysed reaction is a quinone + NADH + 5 H(+)(in) = a quinol + NAD(+) + 4 H(+)(out). Functionally, NDH-1 shuttles electrons from NADH, via FMN and iron-sulfur (Fe-S) centers, to quinones in the respiratory chain. The immediate electron acceptor for the enzyme in this species is believed to be a menaquinone. Couples the redox reaction to proton translocation (for every two electrons transferred, four hydrogen ions are translocated across the cytoplasmic membrane), and thus conserves the redox energy in a proton gradient. In Salinispora tropica (strain ATCC BAA-916 / DSM 44818 / JCM 13857 / NBRC 105044 / CNB-440), this protein is NADH-quinone oxidoreductase subunit D 2.